The sequence spans 475 residues: Putative aldehyde dehydrogenase SSP0762 (475 aa).

201 to 207 provides a ligand contact to NAD(+); it reads GDGQGVG. Residues Glu-245 and Cys-279 contribute to the active site.

It belongs to the aldehyde dehydrogenase family.

The catalysed reaction is an aldehyde + NAD(+) + H2O = a carboxylate + NADH + 2 H(+). The chain is Putative aldehyde dehydrogenase SSP0762 from Staphylococcus saprophyticus subsp. saprophyticus (strain ATCC 15305 / DSM 20229 / NCIMB 8711 / NCTC 7292 / S-41).